The chain runs to 219 residues: Flagellar biosynthetic protein FliZ (219 aa).

A signal peptide spans 1 to 26 (MKKSQYFIVFICFFVLFSVHPIAAAA). Residues 41–61 (KDEKTADQSEQKKEKTTKTAD) are compositionally biased toward basic and acidic residues. The interval 41–62 (KDEKTADQSEQKKEKTTKTADE) is disordered. A helical membrane pass occupies residues 71–96 (VSAFDFVKMIFALLFVIVLIYGLVKL). Positions 200-212 (LEELKQNRSEGKK) are enriched in basic and acidic residues. The tract at residues 200–219 (LEELKQNRSEGKKKGPRHHE) is disordered.

The protein resides in the cell membrane. In terms of biological role, may be a structural component of the flagellum that anchors the rod to the membrane. In Bacillus subtilis (strain 168), this protein is Flagellar biosynthetic protein FliZ (fliZ).